Reading from the N-terminus, the 510-residue chain is Major facilitator superfamily domain-containing protein 4A (510 aa).

12 helical membrane-spanning segments follow: residues 19–39 (LTYWSVFFSFGLCIAFLGPTL), 53–73 (ISWVFFSQQLCLLLGSALGGV), 82–102 (LWALFTSTLVISLVFAVIPFC), 107–127 (VLASVIALAGLAMGCIDTVAN), 139–159 (AFFLQVLHFFVGLGALLSPLI), 218–238 (YAFWIMALINLPVPLAVLFLL), 303–323 (FFAIHITAALVLFMTDGMMGA), 345–365 (GYLPSLFWGFITLGRFISIPV), 380–400 (VGVVVTFLMLLIFSYNVIFLF), 401–421 (VGTASLGLFLSSTFPSMLAYT), 434–454 (VLVTGAGIGEMVLQMLVGLIF), and 462–482 (FLVCGVIFGCLAFIFYILLLF).

This sequence belongs to the major facilitator superfamily.

It is found in the membrane. In Mus musculus (Mouse), this protein is Major facilitator superfamily domain-containing protein 4A.